The primary structure comprises 706 residues: Kinesin-like protein KIP2 (706 aa).

2 stretches are compositionally biased toward low complexity: residues 1–28 (MIQKMSPSLRRPSTRSSSGSSNIPQSPS) and 36–63 (SNLTRNSIRSTSNSGSQSISASSTRSNS). The segment at 1–139 (MIQKMSPSLR…QPRSNSHHGS (139 aa)) is disordered. The 392-residue stretch at 102–493 (SITVTIRPKP…LRFASRAKNV (392 aa)) folds into the Kinesin motor domain. Over residues 127–139 (RYSQPRSNSHHGS) the composition is skewed to polar residues. 202–209 (GMTGSGKT) serves as a coordination point for ATP. The tract at residues 413–445 (VGSNIPSPSASGSSSSSGNATNNGTSPSNHIPY) is disordered. The span at 414 to 441 (GSNIPSPSASGSSSSSGNATNNGTSPSN) shows a compositional bias: low complexity. 3 coiled-coil regions span residues 507–541 (NNDGDKDRTIELLRRQLEEQRRMISELKNRSNIGE), 569–589 (MRAENRVLKYKLENCEKLLDK), and 612–689 (TLLE…RALK).

The protein belongs to the TRAFAC class myosin-kinesin ATPase superfamily. Kinesin family. In terms of assembly, might be dimeric.

The protein localises to the cytoplasm. It localises to the cytoskeleton. Its function is as follows. Required for assembly of the mitotic spindle. The protein is Kinesin-like protein KIP2 (KIP2) of Saccharomyces cerevisiae (strain ATCC 204508 / S288c) (Baker's yeast).